The chain runs to 455 residues: tRNA-2-methylthio-N(6)-dimethylallyladenosine synthase (455 aa).

One can recognise an MTTase N-terminal domain in the interval 10–130 (RKVFIKTYGC…LPDALKRVRR (121 aa)). [4Fe-4S] cluster-binding residues include cysteine 19, cysteine 55, cysteine 93, cysteine 171, cysteine 175, and cysteine 178. Positions 157–389 (RSRGVTAFLT…QALLLRQQKE (233 aa)) constitute a Radical SAM core domain. Positions 392 to 454 (ESLVGKTMDV…PNSLFAEVAG (63 aa)) constitute a TRAM domain.

This sequence belongs to the methylthiotransferase family. MiaB subfamily. As to quaternary structure, monomer. The cofactor is [4Fe-4S] cluster.

It is found in the cytoplasm. The catalysed reaction is N(6)-dimethylallyladenosine(37) in tRNA + (sulfur carrier)-SH + AH2 + 2 S-adenosyl-L-methionine = 2-methylsulfanyl-N(6)-dimethylallyladenosine(37) in tRNA + (sulfur carrier)-H + 5'-deoxyadenosine + L-methionine + A + S-adenosyl-L-homocysteine + 2 H(+). Its function is as follows. Catalyzes the methylthiolation of N6-(dimethylallyl)adenosine (i(6)A), leading to the formation of 2-methylthio-N6-(dimethylallyl)adenosine (ms(2)i(6)A) at position 37 in tRNAs that read codons beginning with uridine. This is tRNA-2-methylthio-N(6)-dimethylallyladenosine synthase from Agrobacterium fabrum (strain C58 / ATCC 33970) (Agrobacterium tumefaciens (strain C58)).